Consider the following 908-residue polypeptide: Mechanosensitive ion channel protein 8 (908 aa).

Residues 1 to 25 (MDFRNSFKSHSSYKQIRSPGDQSEP) are compositionally biased toward polar residues. 4 disordered regions span residues 1 to 88 (MDFR…HTAV), 148 to 172 (DQEN…SFDA), 190 to 221 (VAGS…LQEE), and 242 to 265 (VKTR…WRSG). Over residues 31–70 (PILHDHHPDHSGMVVDDQKPDSTRSSLDDGRNAPVERDAS) the composition is skewed to basic and acidic residues. 2 stretches are compositionally biased toward polar residues: residues 75–85 (QDNTTGTSTDH) and 156–171 (HQTM…TSFD). The span at 196–206 (SSSSHSSSSSS) shows a compositional bias: low complexity. The segment covering 207-218 (ATMRTNQDQPQL) has biased composition (polar residues). Basic and acidic residues predominate over residues 247–256 (RLQDPPREEE). 6 helical membrane-spanning segments follow: residues 298–318 (AITL…ACSL), 341–361 (LVLI…VFFI), 381–401 (AVQN…LFDK), 411–431 (FLPY…LWLI), 673–693 (MINI…LEIA), and 709–729 (AFIF…LFIV).

This sequence belongs to the MscS (TC 1.A.23) family. Expressed in tricellular and mature pollen, and in germinating tube. Not detected in leaves or roots.

Its subcellular location is the cell membrane. It is found in the endomembrane system. Its activity is regulated as follows. Not regulated by MgCl(2), ruthenium red or tetramethylammonium-Cl. Mechanosensitive channel that opens in response to stretch forces in the membrane lipid bilayer. Exhibits a 6.3-fold preference for chloride over sodium. Regulates osmotic forces during pollen hydration and germination. The polypeptide is Mechanosensitive ion channel protein 8 (Arabidopsis thaliana (Mouse-ear cress)).